We begin with the raw amino-acid sequence, 128 residues long: Translation initiation factor 5A (128 aa).

Lysine 35 carries the hypusine modification.

This sequence belongs to the eIF-5A family.

It is found in the cytoplasm. Its function is as follows. Functions by promoting the formation of the first peptide bond. This is Translation initiation factor 5A (eif5a) from Methanosarcina mazei (strain ATCC BAA-159 / DSM 3647 / Goe1 / Go1 / JCM 11833 / OCM 88) (Methanosarcina frisia).